A 422-amino-acid polypeptide reads, in one-letter code: Replication factor C large subunit (422 aa).

ATP is bound at residue 63 to 70; that stretch reads GPPGVGKT.

It belongs to the activator 1 small subunits family. RfcL subfamily. Heteromultimer composed of small subunits (RfcS) and large subunits (RfcL).

Its function is as follows. Part of the RFC clamp loader complex which loads the PCNA sliding clamp onto DNA. This is Replication factor C large subunit from Pyrobaculum aerophilum (strain ATCC 51768 / DSM 7523 / JCM 9630 / CIP 104966 / NBRC 100827 / IM2).